The primary structure comprises 220 residues: Protein-L-isoaspartate O-methyltransferase (220 aa).

Residue S64 is part of the active site.

Belongs to the methyltransferase superfamily. L-isoaspartyl/D-aspartyl protein methyltransferase family.

The protein resides in the cytoplasm. The catalysed reaction is [protein]-L-isoaspartate + S-adenosyl-L-methionine = [protein]-L-isoaspartate alpha-methyl ester + S-adenosyl-L-homocysteine. Functionally, catalyzes the methyl esterification of L-isoaspartyl residues in peptides and proteins that result from spontaneous decomposition of normal L-aspartyl and L-asparaginyl residues. It plays a role in the repair and/or degradation of damaged proteins. The polypeptide is Protein-L-isoaspartate O-methyltransferase (Methanoculleus marisnigri (strain ATCC 35101 / DSM 1498 / JR1)).